Reading from the N-terminus, the 200-residue chain is Recombination protein RecR (200 aa).

The segment at 57 to 72 adopts a C4-type zinc-finger fold; it reads CRQCRTLTEQELCPQC. The 96-residue stretch at 80–175 folds into the Toprim domain; the sequence is TQLCVVEGPM…VASRIAHGVP (96 aa).

Belongs to the RecR family.

May play a role in DNA repair. It seems to be involved in an RecBC-independent recombinational process of DNA repair. It may act with RecF and RecO. In Pseudomonas putida (strain W619), this protein is Recombination protein RecR.